A 1188-amino-acid chain; its full sequence is DNA-directed RNA polymerase subunit beta (1188 aa).

Belongs to the RNA polymerase beta chain family. As to quaternary structure, the RNAP catalytic core consists of 2 alpha, 1 beta, 1 beta' and 1 omega subunit. When a sigma factor is associated with the core the holoenzyme is formed, which can initiate transcription.

The enzyme catalyses RNA(n) + a ribonucleoside 5'-triphosphate = RNA(n+1) + diphosphate. In terms of biological role, DNA-dependent RNA polymerase catalyzes the transcription of DNA into RNA using the four ribonucleoside triphosphates as substrates. The sequence is that of DNA-directed RNA polymerase subunit beta from Streptococcus equi subsp. equi (strain 4047).